The sequence spans 367 residues: Alginate lyase (367 aa).

The N-terminal stretch at 1–27 is a signal peptide; the sequence is MKTSHLIRIALPGALAAALLASQVSQA. Residues 65–66, 138–139, and Tyr256 contribute to the substrate site; these read SK and HT.

The protein belongs to the polysaccharide lyase 5 family.

The protein localises to the periplasm. It catalyses the reaction Eliminative cleavage of alginate to give oligosaccharides with 4-deoxy-alpha-L-erythro-hex-4-enuronosyl groups at their non-reducing ends and beta-D-mannuronate at their reducing end.. Its function is as follows. Catalyzes the depolymerization of alginate by cleaving the beta-1,4 glycosidic bond between two adjacent sugar residues via a beta-elimination mechanism. May serve to degrade mislocalized alginate that is trapped in the periplasmic space. The sequence is that of Alginate lyase from Pseudomonas aeruginosa (strain LESB58).